The following is a 230-amino-acid chain: Sugar fermentation stimulation protein homolog (230 aa).

The protein belongs to the SfsA family.

This Pyrococcus furiosus (strain ATCC 43587 / DSM 3638 / JCM 8422 / Vc1) protein is Sugar fermentation stimulation protein homolog.